A 76-amino-acid polypeptide reads, in one-letter code: DNA-directed RNA polymerase subunit Rpo5 (76 aa).

This sequence belongs to the archaeal Rpo5/eukaryotic RPB5 RNA polymerase subunit family. Part of the RNA polymerase complex.

The protein resides in the cytoplasm. The catalysed reaction is RNA(n) + a ribonucleoside 5'-triphosphate = RNA(n+1) + diphosphate. In terms of biological role, DNA-dependent RNA polymerase (RNAP) catalyzes the transcription of DNA into RNA using the four ribonucleoside triphosphates as substrates. This is DNA-directed RNA polymerase subunit Rpo5 from Archaeoglobus fulgidus (strain ATCC 49558 / DSM 4304 / JCM 9628 / NBRC 100126 / VC-16).